Reading from the N-terminus, the 255-residue chain is NAD kinase (255 aa).

D44 (proton acceptor) is an active-site residue. Residues 44–45, H49, 114–115, D144, A152, 155–160, and Q216 each bind NAD(+); these read DG, NE, and SAYNLS.

The protein belongs to the NAD kinase family. A divalent metal cation is required as a cofactor.

It is found in the cytoplasm. The catalysed reaction is NAD(+) + ATP = ADP + NADP(+) + H(+). Involved in the regulation of the intracellular balance of NAD and NADP, and is a key enzyme in the biosynthesis of NADP. Catalyzes specifically the phosphorylation on 2'-hydroxyl of the adenosine moiety of NAD to yield NADP. This is NAD kinase from Rickettsia peacockii (strain Rustic).